The following is a 392-amino-acid chain: DNA replication and repair protein RecF (392 aa).

Residue 30-37 (GRNGFGKT) participates in ATP binding.

This sequence belongs to the RecF family.

It localises to the cytoplasm. In terms of biological role, the RecF protein is involved in DNA metabolism; it is required for DNA replication and normal SOS inducibility. RecF binds preferentially to single-stranded, linear DNA. It also seems to bind ATP. The protein is DNA replication and repair protein RecF of Corynebacterium aurimucosum (strain ATCC 700975 / DSM 44827 / CIP 107346 / CN-1) (Corynebacterium nigricans).